We begin with the raw amino-acid sequence, 209 residues long: Thiamine-phosphate synthase (209 aa).

4-amino-2-methyl-5-(diphosphooxymethyl)pyrimidine contacts are provided by residues 36–40 and Asn-68; that span reads QYRDK. Positions 69 and 87 each coordinate Mg(2+). Residue Thr-106 participates in 4-amino-2-methyl-5-(diphosphooxymethyl)pyrimidine binding. Position 133–135 (133–135) interacts with 2-[(2R,5Z)-2-carboxy-4-methylthiazol-5(2H)-ylidene]ethyl phosphate; it reads SST. Residue Lys-136 coordinates 4-amino-2-methyl-5-(diphosphooxymethyl)pyrimidine. 2-[(2R,5Z)-2-carboxy-4-methylthiazol-5(2H)-ylidene]ethyl phosphate is bound at residue Gly-163.

Belongs to the thiamine-phosphate synthase family. Mg(2+) is required as a cofactor.

The catalysed reaction is 2-[(2R,5Z)-2-carboxy-4-methylthiazol-5(2H)-ylidene]ethyl phosphate + 4-amino-2-methyl-5-(diphosphooxymethyl)pyrimidine + 2 H(+) = thiamine phosphate + CO2 + diphosphate. It carries out the reaction 2-(2-carboxy-4-methylthiazol-5-yl)ethyl phosphate + 4-amino-2-methyl-5-(diphosphooxymethyl)pyrimidine + 2 H(+) = thiamine phosphate + CO2 + diphosphate. The enzyme catalyses 4-methyl-5-(2-phosphooxyethyl)-thiazole + 4-amino-2-methyl-5-(diphosphooxymethyl)pyrimidine + H(+) = thiamine phosphate + diphosphate. Its pathway is cofactor biosynthesis; thiamine diphosphate biosynthesis; thiamine phosphate from 4-amino-2-methyl-5-diphosphomethylpyrimidine and 4-methyl-5-(2-phosphoethyl)-thiazole: step 1/1. In terms of biological role, condenses 4-methyl-5-(beta-hydroxyethyl)thiazole monophosphate (THZ-P) and 2-methyl-4-amino-5-hydroxymethyl pyrimidine pyrophosphate (HMP-PP) to form thiamine monophosphate (TMP). In Pseudomonas paraeruginosa (strain DSM 24068 / PA7) (Pseudomonas aeruginosa (strain PA7)), this protein is Thiamine-phosphate synthase.